The following is a 99-amino-acid chain: Putative membrane protein insertion efficiency factor (99 aa).

It belongs to the UPF0161 family.

Its subcellular location is the cell membrane. Its function is as follows. Could be involved in insertion of integral membrane proteins into the membrane. The polypeptide is Putative membrane protein insertion efficiency factor (Levilactobacillus brevis (strain ATCC 367 / BCRC 12310 / CIP 105137 / JCM 1170 / LMG 11437 / NCIMB 947 / NCTC 947) (Lactobacillus brevis)).